Reading from the N-terminus, the 247-residue chain is OCIA domain-containing protein 1 (247 aa).

Residues 1–112 (MNGRADFREP…KKLENSPLGE (112 aa)) enclose the OCIA domain. Phosphoserine occurs at positions 108, 116, and 123. 2 disordered regions span residues 113–153 (ALRS…ADNI) and 167–230 (SASM…MQER). Composition is skewed to polar residues over residues 136–146 (SNVSGQSSFGT) and 168–177 (ASMNESTPTG). 2 stretches are compositionally biased toward basic and acidic residues: residues 192–210 (ESPKRKGVTYEELRSKNRE) and 218–230 (HKTDPSVRPMQER). At S193 the chain carries Phosphoserine.

This sequence belongs to the OCIAD1 family. As to quaternary structure, interacts with OCIAD2. Interacts with STAT3. As to expression, expressed at high levels in the brain and at lower levels in the heart, ovary, testis and kidney. Expression is strongest in embryonic stem cells and in the blood vessels.

Its subcellular location is the endosome. Functionally, maintains stem cell potency. Increases STAT3 phosphorylation and controls ERK phosphorylation. May act as a scaffold, increasing STAT3 recruitment onto endosomes. This chain is OCIA domain-containing protein 1, found in Mus musculus (Mouse).